Consider the following 242-residue polypeptide: ATP-dependent dethiobiotin synthetase BioD (242 aa).

An ATP-binding site is contributed by 12–17 (EVGKTV). Threonine 16 is a binding site for Mg(2+). Residue lysine 37 is part of the active site. Serine 41 is a binding site for substrate. Residues aspartate 51 and 112 to 115 (EGAG) each bind ATP. The Mg(2+) site is built by aspartate 51 and glutamate 112.

This sequence belongs to the dethiobiotin synthetase family. Homodimer. It depends on Mg(2+) as a cofactor.

Its subcellular location is the cytoplasm. It catalyses the reaction (7R,8S)-7,8-diammoniononanoate + CO2 + ATP = (4R,5S)-dethiobiotin + ADP + phosphate + 3 H(+). It functions in the pathway cofactor biosynthesis; biotin biosynthesis; biotin from 7,8-diaminononanoate: step 1/2. Functionally, catalyzes a mechanistically unusual reaction, the ATP-dependent insertion of CO2 between the N7 and N8 nitrogen atoms of 7,8-diaminopelargonic acid (DAPA, also called 7,8-diammoniononanoate) to form a ureido ring. This Bacillus thuringiensis subsp. konkukian (strain 97-27) protein is ATP-dependent dethiobiotin synthetase BioD.